The sequence spans 27 residues: Small integral membrane protein 43 (27 aa).

Residues 15-21 (HREPWGF) are important for interaction with SLC2A1 and SLC2A3.

As to quaternary structure, interacts with glucose transporters SLC2A1/GLUT1 and SLC2A3/GLUT3; the interactions may promote SLC2A1- and SLC2A3-mediated glucose transport to meet the energy needs of mesendoderm differentiation.

It localises to the cell membrane. Functionally, required for mesendoderm differentiation. Interacts with glucose transporters and promotes glucose uptake. Probably augments the glucose uptake capacity of glucose transporter proteins to meet the energy needs of mesendoderm differentiation. This chain is Small integral membrane protein 43, found in Pongo abelii (Sumatran orangutan).